Consider the following 130-residue polypeptide: Astrocytic phosphoprotein PEA-15 (130 aa).

The region spanning Glu-3–Asp-81 is the DED domain. 2 positions are modified to phosphoserine: Ser-61 and Ser-90. The tract at residues Lys-98–Lys-107 is microtubule-binding. A Phosphoserine; by PKC modification is found at Ser-104. At Ser-116 the chain carries Phosphoserine; by CaMK2. The interval Lys-122–Lys-129 is microtubule-binding.

Binds RPS6KA3, MAPK3 and MAPK1. Interacts with CASP8 and FADD. Transient interaction with PLD1 and PLD2. Phosphorylated by protein kinase C and calcium-calmodulin-dependent protein kinase. These phosphorylation events are modulated by neurotransmitters or hormones. In terms of tissue distribution, predominantly expressed in the brain. Low levels in some peripheral organs.

The protein localises to the cytoplasm. In terms of biological role, blocks Ras-mediated inhibition of integrin activation and modulates the ERK MAP kinase cascade. Inhibits RPS6KA3 activities by retaining it in the cytoplasm. Inhibits both TNFRSF6- and TNFRSF1A-mediated CASP8 activity and apoptosis. Regulates glucose transport by controlling both the content of SLC2A1 glucose transporters on the plasma membrane and the insulin-dependent trafficking of SLC2A4 from the cell interior to the surface. The polypeptide is Astrocytic phosphoprotein PEA-15 (Pea15) (Mus musculus (Mouse)).